The chain runs to 566 residues: Acyl-CoA synthetase ALT10 (566 aa).

Residue 196–207 (MLFTSGTTGAPK) participates in AMP binding. The interval 473–551 (EVEHAALSHE…DAVHYNRTGK (79 aa)) is AMP-binding.

It belongs to the ATP-dependent AMP-binding enzyme family.

It functions in the pathway mycotoxin biosynthesis. Its function is as follows. Acyl-CoA synthetase; part of the gene cluster that mediates the biosynthesis of the host-selective toxins (HSTs) AAL-toxins, sphinganine-analog mycotoxins responsible for Alternaria stem canker on tomato by the tomato pathotype. The biosynthesis starts with the polyketide synthase ALT1-catalyzed C-16 carbon chain assembly from one starter acetyl-CoA unit with malonyl-CoA extender units. ALT1 also selectively transfers methyl groups at the first and the third cycle of chain elongation for AAL toxin. The C-16 polyketide chain is released from the enzyme by a nucleophilic attack of a carbanion, which is derived from R-carbon of glycin by decarboxylation, on the carbonyl carbon of polyketide acyl chain. This step is probably catalyzed by a pyridoxal 5'-phosphate-dependent aminoacyl transferase ALT4. The respective functions of the other enzymes encoded by the cluster have still to be elucidated. The sphingosine N-acyltransferase-like protein ALT7 seems not to act as a resistance/self-tolerance factor against the toxin in the toxin biosynthetic gene cluster, contrary to what is expected. In Alternaria alternata (Alternaria rot fungus), this protein is Acyl-CoA synthetase ALT10.